A 157-amino-acid chain; its full sequence is CASP-like protein 1 (157 aa).

The Cytoplasmic portion of the chain corresponds to 1–13 (MKTEARDGGSEWR). The helical transmembrane segment at 14–34 (WVAIFELFLRLAAIVSTSVAV) threads the bilayer. Residues 35-40 (YAAMGK) are Extracellular-facing. Residues 41 to 61 (IFVVAVNGVACFYLLMSLPVS) traverse the membrane as a helical segment. Topologically, residues 62–82 (IFNIMRPHAYPANRVFLNIMD) are cytoplasmic. Residues 83 to 103 (MVMVALVTAGALAAGIVYLVE) traverse the membrane as a helical segment. Over 104–121 (KAGNARASWVSVWSQFDS) the chain is Extracellular. Residues 122–142 (SSCFAVLALILHVLLSGVILY) traverse the membrane as a helical segment. The Cytoplasmic portion of the chain corresponds to 143 to 157 (KQALNIKFKKLDSVD).

Belongs to the Casparian strip membrane proteins (CASP) family. As to quaternary structure, homodimer and heterodimers.

The protein resides in the cell membrane. The protein is CASP-like protein 1 of Picea sitchensis (Sitka spruce).